Consider the following 393-residue polypeptide: Pyrin and HIN domain-containing protein 1-like (393 aa).

The region spanning 1–87 is the Pyrin domain; sequence MVNEYKRIVL…ANKLKNEKAK (87 aa). The segment at 82-188 is disordered; it reads KNEKAKAKRK…TPTRSSSRIL (107 aa). Residues 87 to 102 are compositionally biased toward basic residues; sequence KAKRKGKGKRKTAAKR. 2 stretches are compositionally biased toward polar residues: residues 108-118 and 126-151; these read PSTSQPMSTTN and GRSTPDTQVAQLSLPTASRRNQAIQI. Residues 152-169 are compositionally biased toward low complexity; that stretch reads SPTIASSSGQTSSRSSET. The span at 170–186 shows a compositional bias: polar residues; the sequence is LQSIIQSPETPTRSSSR. In terms of domain architecture, HIN-200 spans 219-393; that stretch reads NVPKEPSEEN…NPGDKLRLML (175 aa).

It belongs to the HIN-200 family.

The protein localises to the nucleus. This is Pyrin and HIN domain-containing protein 1-like from Mus musculus (Mouse).